A 1043-amino-acid chain; its full sequence is Probable inorganic carbon transporter subunit DabA (1043 aa).

Residues cysteine 460, aspartate 462, histidine 719, and cysteine 734 each contribute to the Zn(2+) site.

Belongs to the inorganic carbon transporter (TC 9.A.2) DabA family. Forms a complex with DabB. Zn(2+) is required as a cofactor.

It localises to the cell inner membrane. In terms of biological role, part of an energy-coupled inorganic carbon pump. In Thiobacillus denitrificans (strain ATCC 25259 / T1), this protein is Probable inorganic carbon transporter subunit DabA.